The following is a 273-amino-acid chain: Phosphate import ATP-binding protein PstB (273 aa).

A disordered region spans residues 1 to 20; it reads MTTVSTAAASGPAVPPPRID. Positions 27–268 constitute an ABC transporter domain; the sequence is VAARNLNFYY…PSDRRTQDYI (242 aa). 59 to 66 contributes to the ATP binding site; sequence GPSGCGKS.

The protein belongs to the ABC transporter superfamily. Phosphate importer (TC 3.A.1.7) family. In terms of assembly, the complex is composed of two ATP-binding proteins (PstB), two transmembrane proteins (PstC and PstA) and a solute-binding protein (PstS).

The protein localises to the cell inner membrane. The catalysed reaction is phosphate(out) + ATP + H2O = ADP + 2 phosphate(in) + H(+). Its function is as follows. Part of the ABC transporter complex PstSACB involved in phosphate import. Responsible for energy coupling to the transport system. The sequence is that of Phosphate import ATP-binding protein PstB from Nitrobacter winogradskyi (strain ATCC 25391 / DSM 10237 / CIP 104748 / NCIMB 11846 / Nb-255).